Consider the following 510-residue polypeptide: NAD(P)H-quinone oxidoreductase subunit 2, chloroplastic (510 aa).

Transmembrane regions (helical) follow at residues 24 to 44, 59 to 79, 99 to 119, 124 to 144, 149 to 169, 183 to 203, 229 to 249, 295 to 315, 323 to 343, 347 to 367, 395 to 415, and 418 to 438; these read LLLF…GLIL, WFYF…LFRW, IFQF…VEYI, MAIT…MFLC, LITI…LSGY, YLLM…WLYG, ISIA…PAPF, WHLL…LIAI, MLAY…IVGD, GYAS…GTFA, ALSS…AGFF, and LHLF…IGLL.

Belongs to the complex I subunit 2 family. In terms of assembly, NDH is composed of at least 16 different subunits, 5 of which are encoded in the nucleus.

The protein localises to the plastid. It is found in the chloroplast thylakoid membrane. It carries out the reaction a plastoquinone + NADH + (n+1) H(+)(in) = a plastoquinol + NAD(+) + n H(+)(out). The catalysed reaction is a plastoquinone + NADPH + (n+1) H(+)(in) = a plastoquinol + NADP(+) + n H(+)(out). NDH shuttles electrons from NAD(P)H:plastoquinone, via FMN and iron-sulfur (Fe-S) centers, to quinones in the photosynthetic chain and possibly in a chloroplast respiratory chain. The immediate electron acceptor for the enzyme in this species is believed to be plastoquinone. Couples the redox reaction to proton translocation, and thus conserves the redox energy in a proton gradient. In Allium textile (Textile onion), this protein is NAD(P)H-quinone oxidoreductase subunit 2, chloroplastic.